We begin with the raw amino-acid sequence, 415 residues long: Gamma-glutamyl phosphate reductase (415 aa).

This sequence belongs to the gamma-glutamyl phosphate reductase family.

The protein resides in the cytoplasm. It carries out the reaction L-glutamate 5-semialdehyde + phosphate + NADP(+) = L-glutamyl 5-phosphate + NADPH + H(+). The protein operates within amino-acid biosynthesis; L-proline biosynthesis; L-glutamate 5-semialdehyde from L-glutamate: step 2/2. Functionally, catalyzes the NADPH-dependent reduction of L-glutamate 5-phosphate into L-glutamate 5-semialdehyde and phosphate. The product spontaneously undergoes cyclization to form 1-pyrroline-5-carboxylate. This is Gamma-glutamyl phosphate reductase from Thermotoga petrophila (strain ATCC BAA-488 / DSM 13995 / JCM 10881 / RKU-1).